Here is a 309-residue protein sequence, read N- to C-terminus: Glutaminase (309 aa).

The substrate site is built by S64, N114, E160, N167, Y191, Y243, and V261.

This sequence belongs to the glutaminase family. Homotetramer.

The enzyme catalyses L-glutamine + H2O = L-glutamate + NH4(+). This Agrobacterium fabrum (strain C58 / ATCC 33970) (Agrobacterium tumefaciens (strain C58)) protein is Glutaminase.